An 803-amino-acid chain; its full sequence is Phenylalanine--tRNA ligase beta subunit (803 aa).

One can recognise a tRNA-binding domain in the interval 39-152; it reads TPGFQKVVAG…PDASPGADAA (114 aa). The B5 domain occupies 406 to 480; it reads RQPVTIELRP…RLYGYNRIPV (75 aa). 4 residues coordinate Mg(2+): D458, D464, E467, and E468. Positions 709–802 constitute an FDX-ACB domain; that stretch reads PRFPAVERDL…LEERLGASLR (94 aa).

Belongs to the phenylalanyl-tRNA synthetase beta subunit family. Type 1 subfamily. In terms of assembly, tetramer of two alpha and two beta subunits. Mg(2+) is required as a cofactor.

It localises to the cytoplasm. It catalyses the reaction tRNA(Phe) + L-phenylalanine + ATP = L-phenylalanyl-tRNA(Phe) + AMP + diphosphate + H(+). This chain is Phenylalanine--tRNA ligase beta subunit, found in Moorella thermoacetica (strain ATCC 39073 / JCM 9320).